Consider the following 204-residue polypeptide: Dephospho-CoA kinase (204 aa).

Residues Val-3–Gln-200 form the DPCK domain. ATP is bound at residue Gly-11–Thr-16.

This sequence belongs to the CoaE family.

The protein localises to the cytoplasm. The catalysed reaction is 3'-dephospho-CoA + ATP = ADP + CoA + H(+). The protein operates within cofactor biosynthesis; coenzyme A biosynthesis; CoA from (R)-pantothenate: step 5/5. Its function is as follows. Catalyzes the phosphorylation of the 3'-hydroxyl group of dephosphocoenzyme A to form coenzyme A. This is Dephospho-CoA kinase from Aeromonas hydrophila.